Here is a 142-residue protein sequence, read N- to C-terminus: Large ribosomal subunit protein uL13 (142 aa).

This sequence belongs to the universal ribosomal protein uL13 family. As to quaternary structure, part of the 50S ribosomal subunit.

In terms of biological role, this protein is one of the early assembly proteins of the 50S ribosomal subunit, although it is not seen to bind rRNA by itself. It is important during the early stages of 50S assembly. This chain is Large ribosomal subunit protein uL13, found in Serratia proteamaculans (strain 568).